Consider the following 110-residue polypeptide: Large ribosomal subunit protein P2B (110 aa).

Residues threonine 73 to alanine 88 show a composition bias toward low complexity. The segment at threonine 73 to aspartate 110 is disordered. Positions alanine 91 to methionine 104 are enriched in acidic residues. Serine 100 carries the post-translational modification Phosphoserine.

The protein belongs to the eukaryotic ribosomal protein P1/P2 family. In terms of assembly, component of the large ribosomal subunit (LSU). Mature yeast ribosomes consist of a small (40S) and a large (60S) subunit. The 40S small subunit contains 1 molecule of ribosomal RNA (18S rRNA) and at least 33 different proteins. The large 60S subunit contains 3 rRNA molecules (25S, 5.8S and 5S rRNA) and at least 46 different proteins. The acidic ribosomal P-proteins form the stalk structure of the 60S subunit. They are organized as a pentameric complex in which uL10/P0 interacts with 2 heterodimers of P1 and P2 proteins.

Its subcellular location is the cytoplasm. Its function is as follows. Component of the ribosome, a large ribonucleoprotein complex responsible for the synthesis of proteins in the cell. The small ribosomal subunit (SSU) binds messenger RNAs (mRNAs) and translates the encoded message by selecting cognate aminoacyl-transfer RNA (tRNA) molecules. The large subunit (LSU) contains the ribosomal catalytic site termed the peptidyl transferase center (PTC), which catalyzes the formation of peptide bonds, thereby polymerizing the amino acids delivered by tRNAs into a polypeptide chain. The nascent polypeptides leave the ribosome through a tunnel in the LSU and interact with protein factors that function in enzymatic processing, targeting, and the membrane insertion of nascent chains at the exit of the ribosomal tunnel. The protein is Large ribosomal subunit protein P2B (rpp202) of Schizosaccharomyces pombe (strain 972 / ATCC 24843) (Fission yeast).